The primary structure comprises 323 residues: tRNA dimethylallyltransferase (323 aa).

16–23 provides a ligand contact to ATP; the sequence is GPTASGKT. 18–23 lines the substrate pocket; sequence TASGKT. Interaction with substrate tRNA stretches follow at residues 41-44, 165-169, 253-258, and 286-293; these read DSAL, QRIQR, RCVGYR, and KRQITWLR.

Belongs to the IPP transferase family. In terms of assembly, monomer. Mg(2+) is required as a cofactor.

It carries out the reaction adenosine(37) in tRNA + dimethylallyl diphosphate = N(6)-dimethylallyladenosine(37) in tRNA + diphosphate. Functionally, catalyzes the transfer of a dimethylallyl group onto the adenine at position 37 in tRNAs that read codons beginning with uridine, leading to the formation of N6-(dimethylallyl)adenosine (i(6)A). This Ralstonia nicotianae (strain ATCC BAA-1114 / GMI1000) (Ralstonia solanacearum) protein is tRNA dimethylallyltransferase.